We begin with the raw amino-acid sequence, 60 residues long: Large ribosomal subunit protein bL32 (60 aa).

The tract at residues M1 to A60 is disordered. Residues S9 to H19 are compositionally biased toward basic residues.

Belongs to the bacterial ribosomal protein bL32 family.

The chain is Large ribosomal subunit protein bL32 from Paracidovorax citrulli (strain AAC00-1) (Acidovorax citrulli).